We begin with the raw amino-acid sequence, 122 residues long: Autophagy-related protein 8b (122 aa).

Gly117 carries the Phosphatidylethanolamine amidated glycine lipid modification. Positions 118 to 122 (GSFYC) are cleaved as a propeptide — removed in mature form.

Belongs to the ATG8 family. Interacts with ATG4. Interacts with NBR1. The C-terminal 5 residues are removed by ATG4 to expose Gly-117 at the C-terminus. This Gly-117 forms then a thioester bond with the 'Cys-558' of ATG7 (E1-like activating enzyme) before being transferred to the 'Cys-258' of ATG3 (the specific E2 conjugating enzyme), in order to be finally amidated with phosphatidylethanolamine. This lipid modification anchors ATG8 to autophagosomes. As to expression, constitutively expressed.

It is found in the cytoplasmic vesicle. It localises to the autophagosome membrane. The protein resides in the vacuole membrane. The protein localises to the cytoplasm. Its subcellular location is the cytoskeleton. In terms of biological role, ubiquitin-like modifier involved in autophagosomes formation. May mediate the delivery of the autophagosomes to the vacuole via the microtubule cytoskeleton. The protein is Autophagy-related protein 8b (ATG8B) of Arabidopsis thaliana (Mouse-ear cress).